Reading from the N-terminus, the 580-residue chain is MSASSLLEQRPKGQGNKVQNGSVHQKDGLNDDDFEPYLSPQARPNNAYTAMSDSYLPSYYSPSIGFSYSLGEAAWSTGGDTAMPYLTSYGQLSNGEPHFLPDAMFGQPGALGSTPFLGQHGFNFFPSGIDFSAWGNNSSQGQSTQSSGYSSNYAYAPSSLGGAMIDGQSAFASETLNKAPGMNTIDQGMAALKLGSTEVASNVPKVVGSAVGSGSITSNIVASNSLPPATIAPPKPASWADIASKPAKQQPKLKTKNGIAGSSLPPPPIKHNMDIGTWDNKGPVAKAPSQALVQNIGQQPTQGSPQPVGQQANNSPPVAQASVGQQTQPLPPPPPQPAQLSVQQQAAQPTRWVAPRNRGSGFGHNGVDGNGVGQTQAGSGSTPSEPHPVLEKLRSINNYNPKDFDWNLKHGRVFIIKSYSEDDIHRSIKYNIWCSTEHGNKRLDAAYRSMNGKGPVYLLFSVNGSGHFCGVAEMKSAVDYNTCAGVWSQDKWKGRFDVRWIFVKDVPNSQLRHIRLENNENKPVTNSRDTQEVPLEKAKQVLKIIASYKHTTSIFDDFSHYEKRQEEEESVKKERQGRGK.

The tract at residues Met1–Asn45 is disordered. An N-acetylserine modification is found at Ser2. Residues Ser2, Ser4, Ser5, Ser22, Ser39, and Ser196 each carry the phosphoserine modification. Positions Ser2–Glu385 are localization to mRNA processing bodies (P-bodies). Residues Ala247–Pro388 are disordered. Positions Ala291–Pro317 are enriched in polar residues. Residues Ala338–Thr350 are compositionally biased toward low complexity. Ser360 carries the post-translational modification Phosphoserine. The span at Ser360 to Val372 shows a compositional bias: gly residues. Over residues Gly373–Ser384 the composition is skewed to polar residues. The interval Pro386–Lys580 is interaction with m6A-containing mRNAs. Position 395 is a phosphoserine (Ser395). The region spanning Gly411–Ile545 is the YTH domain. Residues Lys417–Tyr419, Asp423, Trp433–Cys434, Asn463, Trp487, and Trp492 contribute to the RNA site.

The protein belongs to the YTHDF family. YTHDF2 subfamily. Interacts with CNOT1; interaction is direct and promotes recruitment of the CCR4-NOT complex. Interacts with YTHDF3. Interacts with RIDA/HRSP12; interaction leads to recruitment of the ribonuclease P/MRP complex. Ubiquitinated by the SCF(SKP2) complex, leading to its degradation.

Its subcellular location is the cytoplasm. The protein resides in the cytosol. It localises to the P-body. The protein localises to the stress granule. It is found in the nucleus. Specifically recognizes and binds N6-methyladenosine (m6A)-containing RNAs, and regulates their stability. M6A is a modification present at internal sites of mRNAs and some non-coding RNAs and plays a role in mRNA stability and processing. Acts as a regulator of mRNA stability by promoting degradation of m6A-containing mRNAs via interaction with the CCR4-NOT and ribonuclease P/MRP complexes, depending on the context. The YTHDF paralogs (YTHDF1, YTHDF2 and YTHDF3) share m6A-containing mRNAs targets and act redundantly to mediate mRNA degradation and cellular differentiation. M6A-containing mRNAs containing a binding site for RIDA/HRSP12 (5'-GGUUC-3') are preferentially degraded by endoribonucleolytic cleavage: cooperative binding of RIDA/HRSP12 and YTHDF2 to transcripts leads to recruitment of the ribonuclease P/MRP complex. Other m6A-containing mRNAs undergo deadenylation via direct interaction between YTHDF2 and CNOT1, leading to recruitment of the CCR4-NOT and subsequent deadenylation of m6A-containing mRNAs. Required maternally to regulate oocyte maturation: probably acts by binding to m6A-containing mRNAs, thereby regulating maternal transcript dosage during oocyte maturation, which is essential for the competence of oocytes to sustain early zygotic development. Also required during spermatogenesis: regulates spermagonial adhesion by promoting degradation of m6A-containing transcripts coding for matrix metallopeptidases. Also involved in hematopoietic stem cells specification by binding to m6A-containing mRNAs, leading to promote their degradation. Also acts as a regulator of neural development by promoting m6A-dependent degradation of neural development-related mRNA targets. Inhibits neural specification of induced pluripotent stem cells by binding to methylated neural-specific mRNAs and promoting their degradation, thereby restraining neural differentiation. Regulates circadian regulation of hepatic lipid metabolism: acts by promoting m6A-dependent degradation of PPARA transcripts. Regulates the innate immune response to infection by inhibiting the type I interferon response: acts by binding to m6A-containing IFNB transcripts and promoting their degradation. May also act as a promoter of cap-independent mRNA translation following heat shock stress: upon stress, relocalizes to the nucleus and specifically binds mRNAs with some m6A methylation mark at their 5'-UTR, protecting demethylation of mRNAs by FTO, thereby promoting cap-independent mRNA translation. Regulates mitotic entry by promoting the phase-specific m6A-dependent degradation of WEE1 transcripts. Promotes formation of phase-separated membraneless compartments, such as P-bodies or stress granules, by undergoing liquid-liquid phase separation upon binding to mRNAs containing multiple m6A-modified residues: polymethylated mRNAs act as a multivalent scaffold for the binding of YTHDF proteins, juxtaposing their disordered regions and thereby leading to phase separation. The resulting mRNA-YTHDF complexes then partition into different endogenous phase-separated membraneless compartments, such as P-bodies, stress granules or neuronal RNA granules. May also recognize and bind RNAs modified by C5-methylcytosine (m5C) and act as a regulator of rRNA processing. The chain is YTH domain-containing family protein 2 from Bos taurus (Bovine).